The chain runs to 367 residues: Heme A synthase (367 aa).

5 helical membrane-spanning segments follow: residues 25 to 45 (ALRF…LVGG), 111 to 131 (LIAR…WLTG), 139 to 159 (WPLV…WWMV), 174 to 194 (LATH…IMRG), and 210 to 230 (GFAA…ALVA). His-274 contacts heme. The next 3 membrane-spanning stretches (helical) occupy residues 276–296 (IGAY…LRAA), 305–325 (AILL…TLLM), and 327–347 (VPLH…GFAV). Residue His-335 coordinates heme.

The protein belongs to the COX15/CtaA family. Type 2 subfamily. As to quaternary structure, interacts with CtaB. Heme b is required as a cofactor.

It is found in the cell membrane. It catalyses the reaction Fe(II)-heme o + 2 A + H2O = Fe(II)-heme a + 2 AH2. It participates in porphyrin-containing compound metabolism; heme A biosynthesis; heme A from heme O: step 1/1. Its function is as follows. Catalyzes the conversion of heme O to heme A by two successive hydroxylations of the methyl group at C8. The first hydroxylation forms heme I, the second hydroxylation results in an unstable dihydroxymethyl group, which spontaneously dehydrates, resulting in the formyl group of heme A. This Rhizobium johnstonii (strain DSM 114642 / LMG 32736 / 3841) (Rhizobium leguminosarum bv. viciae) protein is Heme A synthase.